The chain runs to 224 residues: 7-cyano-7-deazaguanine synthase (224 aa).

Position 10 to 20 (10 to 20 (LSGGLDSATVV)) interacts with ATP. Residues cysteine 189, cysteine 199, cysteine 202, and cysteine 205 each coordinate Zn(2+).

This sequence belongs to the QueC family. The cofactor is Zn(2+).

It catalyses the reaction 7-carboxy-7-deazaguanine + NH4(+) + ATP = 7-cyano-7-deazaguanine + ADP + phosphate + H2O + H(+). Its pathway is purine metabolism; 7-cyano-7-deazaguanine biosynthesis. In terms of biological role, catalyzes the ATP-dependent conversion of 7-carboxy-7-deazaguanine (CDG) to 7-cyano-7-deazaguanine (preQ(0)). The chain is 7-cyano-7-deazaguanine synthase from Stutzerimonas stutzeri (strain A1501) (Pseudomonas stutzeri).